Here is a 243-residue protein sequence, read N- to C-terminus: Protein IN2-1 (243 aa).

The interval 1-26 (MAAAAGPSSSVKESLPPALGSTSQPP) is disordered. One can recognise a GST N-terminal domain in the interval 31–112 (GTTRLYICYF…YIDSNFDGPA (82 aa)). Residues Lys-70, Val-84, and 96 to 97 (ES) contribute to the glutathione site. The GST C-terminal domain maps to 109-240 (DGPALLPEDA…FLLDLAKSHL (132 aa)).

Belongs to the GST superfamily. HSP26 family. Leaves and roots. It is more strongly induced in the leaves relative to the roots.

This Zea mays (Maize) protein is Protein IN2-1 (IN2-1).